The primary structure comprises 164 residues: Lipoprotein signal peptidase (164 aa).

A run of 2 helical transmembrane segments spans residues 68–88 and 96–116; these read TILV…LWNA and FWGL…RAMF. Catalysis depends on residues Asp-121 and Asp-139. Residues 134 to 154 traverse the membrane as a helical segment; the sequence is TFNVADSAIVVGSCLLLIDLL.

This sequence belongs to the peptidase A8 family.

The protein localises to the cell inner membrane. It catalyses the reaction Release of signal peptides from bacterial membrane prolipoproteins. Hydrolyzes -Xaa-Yaa-Zaa-|-(S,diacylglyceryl)Cys-, in which Xaa is hydrophobic (preferably Leu), and Yaa (Ala or Ser) and Zaa (Gly or Ala) have small, neutral side chains.. It participates in protein modification; lipoprotein biosynthesis (signal peptide cleavage). Its function is as follows. This protein specifically catalyzes the removal of signal peptides from prolipoproteins. The protein is Lipoprotein signal peptidase of Solibacter usitatus (strain Ellin6076).